The primary structure comprises 85 residues: MKAGIHPDYRKVVFHDTTVDHYFVVGSTLQTDRTIEWEGKTYPYITIEVSSESHPFYTGKQRVVQKEGRVANFTRRFGQFAKESK.

Belongs to the bacterial ribosomal protein bL31 family. Type B subfamily. Part of the 50S ribosomal subunit.

The sequence is that of Large ribosomal subunit protein bL31B from Vibrio cholerae serotype O1 (strain ATCC 39541 / Classical Ogawa 395 / O395).